A 276-amino-acid chain; its full sequence is 2-dehydro-3-deoxyphosphooctonate aldolase (276 aa).

This sequence belongs to the KdsA family.

The protein localises to the cytoplasm. The catalysed reaction is D-arabinose 5-phosphate + phosphoenolpyruvate + H2O = 3-deoxy-alpha-D-manno-2-octulosonate-8-phosphate + phosphate. It participates in carbohydrate biosynthesis; 3-deoxy-D-manno-octulosonate biosynthesis; 3-deoxy-D-manno-octulosonate from D-ribulose 5-phosphate: step 2/3. The protein operates within bacterial outer membrane biogenesis; lipopolysaccharide biosynthesis. This is 2-dehydro-3-deoxyphosphooctonate aldolase from Xylella fastidiosa (strain 9a5c).